A 297-amino-acid polypeptide reads, in one-letter code: Probable GTP 3',8-cyclase (297 aa).

Positions 4–227 (RYGRQIRSFR…MQNRKKYVID (224 aa)) constitute a Radical SAM core domain. Position 13 (arginine 13) interacts with GTP. Residues cysteine 20 and cysteine 24 each contribute to the [4Fe-4S] cluster site. S-adenosyl-L-methionine is bound at residue tyrosine 26. Cysteine 27 provides a ligand contact to [4Fe-4S] cluster. Lysine 61 provides a ligand contact to GTP. Glycine 65 is an S-adenosyl-L-methionine binding site. A GTP-binding site is contributed by threonine 91. Serine 115 contributes to the S-adenosyl-L-methionine binding site. GTP is bound at residue lysine 152. Residues cysteine 243 and cysteine 246 each coordinate [4Fe-4S] cluster. GTP is bound at residue 248-250 (RIR). Residue cysteine 260 coordinates [4Fe-4S] cluster.

Belongs to the radical SAM superfamily. MoaA family. The cofactor is [4Fe-4S] cluster.

The catalysed reaction is GTP + AH2 + S-adenosyl-L-methionine = (8S)-3',8-cyclo-7,8-dihydroguanosine 5'-triphosphate + 5'-deoxyadenosine + L-methionine + A + H(+). Its pathway is cofactor biosynthesis; molybdopterin biosynthesis. Catalyzes the cyclization of GTP to (8S)-3',8-cyclo-7,8-dihydroguanosine 5'-triphosphate. The protein is Probable GTP 3',8-cyclase of Methanococcus maripaludis (strain DSM 14266 / JCM 13030 / NBRC 101832 / S2 / LL).